The primary structure comprises 205 residues: Holliday junction branch migration complex subunit RuvA (205 aa).

The segment at 1–64 is domain I; it reads MIGKLKGTID…EDQLKLFGFL (64 aa). The interval 65-143 is domain II; sequence SALEREWFRL…AFVGEMAPSI (79 aa). Residues 144-153 are flexible linker; that stretch reads GLKQELGEGV. Positions 153–205 are domain III; it reads VAAAPVSDAVSALTNLGYSRDQAANAVAAALKNGGEGADSARLIRLGLKELSR.

This sequence belongs to the RuvA family. Homotetramer. Forms an RuvA(8)-RuvB(12)-Holliday junction (HJ) complex. HJ DNA is sandwiched between 2 RuvA tetramers; dsDNA enters through RuvA and exits via RuvB. An RuvB hexamer assembles on each DNA strand where it exits the tetramer. Each RuvB hexamer is contacted by two RuvA subunits (via domain III) on 2 adjacent RuvB subunits; this complex drives branch migration. In the full resolvosome a probable DNA-RuvA(4)-RuvB(12)-RuvC(2) complex forms which resolves the HJ.

The protein localises to the cytoplasm. Its function is as follows. The RuvA-RuvB-RuvC complex processes Holliday junction (HJ) DNA during genetic recombination and DNA repair, while the RuvA-RuvB complex plays an important role in the rescue of blocked DNA replication forks via replication fork reversal (RFR). RuvA specifically binds to HJ cruciform DNA, conferring on it an open structure. The RuvB hexamer acts as an ATP-dependent pump, pulling dsDNA into and through the RuvAB complex. HJ branch migration allows RuvC to scan DNA until it finds its consensus sequence, where it cleaves and resolves the cruciform DNA. This is Holliday junction branch migration complex subunit RuvA from Sinorhizobium medicae (strain WSM419) (Ensifer medicae).